The sequence spans 177 residues: MATIVKKQETIQDKDQVKAYLTQKGLVYESYKTPESLDLILGQKGLSDAEKEEVLSGLEYRFDQLKKQHGYKANDLVVLHDEVPGISDMLAKFDKLHIHTDEEVRYIIDGSGIFGFIIDGERFEVHVGKGDFISIPANTNHWFTLDQTMRIKAVRYFKDNSGWTPVYVDESKVLINA.

4 residues coordinate Fe(2+): histidine 97, histidine 99, glutamate 103, and histidine 141. Ni(2+) contacts are provided by histidine 97, histidine 99, glutamate 103, and histidine 141.

Belongs to the acireductone dioxygenase (ARD) family. In terms of assembly, monomer. It depends on Fe(2+) as a cofactor. Requires Ni(2+) as cofactor.

It catalyses the reaction 1,2-dihydroxy-5-(methylsulfanyl)pent-1-en-3-one + O2 = 3-(methylsulfanyl)propanoate + CO + formate + 2 H(+). It carries out the reaction 1,2-dihydroxy-5-(methylsulfanyl)pent-1-en-3-one + O2 = 4-methylsulfanyl-2-oxobutanoate + formate + 2 H(+). The protein operates within amino-acid biosynthesis; L-methionine biosynthesis via salvage pathway; L-methionine from S-methyl-5-thio-alpha-D-ribose 1-phosphate: step 5/6. Catalyzes 2 different reactions between oxygen and the acireductone 1,2-dihydroxy-3-keto-5-methylthiopentene (DHK-MTPene) depending upon the metal bound in the active site. Fe-containing acireductone dioxygenase (Fe-ARD) produces formate and 2-keto-4-methylthiobutyrate (KMTB), the alpha-ketoacid precursor of methionine in the methionine recycle pathway. Ni-containing acireductone dioxygenase (Ni-ARD) produces methylthiopropionate, carbon monoxide and formate, and does not lie on the methionine recycle pathway. This is Acireductone dioxygenase from Leptospira biflexa serovar Patoc (strain Patoc 1 / ATCC 23582 / Paris).